A 377-amino-acid chain; its full sequence is Beta-lactamase (377 aa).

Residues 1–19 (MFKTTLCALLITASCSTFA) form the signal peptide. Serine 80 serves as the catalytic Acyl-ester intermediate. Residues serine 80, glutamine 136, tyrosine 166, asparagine 168, alanine 334, and asparagine 359 each contribute to the a beta-lactam site.

It belongs to the class-C beta-lactamase family. Monomer.

The protein localises to the periplasm. The enzyme catalyses a beta-lactam + H2O = a substituted beta-amino acid. Inhibited by the beta-lactamase-blocking agents avibactam, enmetazobactam, relebactam, nacubactam, vaborbactam, taniborbactam, zidebactam, and beta-lactam-analog boronic acids, via a covalent binding to Ser-80. Inhibited by non-beta-lactam, benzo(b)thiophene-2-boronic acid (BZBTH2B) and various cyclic boronates. Not inhibited by clavulanic acid. Inhibited by O-aryloxycarbonyl hydroxamates, via cross-linking of the active site Ser-80 to Lys-331. Weakly inhibited by citric acid. Class C beta-lactamase which confers resistance to penicillins and cephalosporins. Has benzylpenicillin- and cephaloridine-hydrolyzing activity. Has weak cefuroxime, cefotaxime, cefoxitin and oxacillin-hydrolyzing activities. In Escherichia coli (strain K12), this protein is Beta-lactamase.